The sequence spans 51 residues: uncharacterized protein (51 aa).

This is an uncharacterized protein from Treponema pallidum (strain Nichols).